The sequence spans 767 residues: 5-methyltetrahydropteroyltriglutamate--homocysteine methyltransferase (767 aa).

K19 lines the 5-methyltetrahydropteroyltri-L-glutamate pocket. The residue at position 89 (S89) is a Phosphoserine. N126 lines the 5-methyltetrahydropteroyltri-L-glutamate pocket. Position 242 is a phosphoserine (S242). L-homocysteine is bound by residues 444-446 (IGS) and E497. L-methionine-binding positions include 444–446 (IGS) and E497. 5-methyltetrahydropteroyltri-L-glutamate contacts are provided by residues D502, Y525, and 528–529 (RY). At T566 the chain carries Phosphothreonine. W574 contacts 5-methyltetrahydropteroyltri-L-glutamate. Residue D612 coordinates L-homocysteine. D612 contributes to the L-methionine binding site. A Phosphoserine modification is found at S629. Zn(2+) contacts are provided by H655, C657, and E677. The Proton donor role is filled by H705. The residue at position 706 (S706) is a Phosphoserine. C737 contributes to the Zn(2+) binding site.

It belongs to the vitamin-B12 independent methionine synthase family. It depends on Zn(2+) as a cofactor.

It carries out the reaction 5-methyltetrahydropteroyltri-L-glutamate + L-homocysteine = tetrahydropteroyltri-L-glutamate + L-methionine. The protein operates within amino-acid biosynthesis; L-methionine biosynthesis via de novo pathway; L-methionine from L-homocysteine (MetE route): step 1/1. Functionally, catalyzes the transfer of a methyl group from 5-methyltetrahydrofolate to homocysteine resulting in methionine formation. The sequence is that of 5-methyltetrahydropteroyltriglutamate--homocysteine methyltransferase (MET6) from Saccharomyces cerevisiae (strain ATCC 204508 / S288c) (Baker's yeast).